Consider the following 928-residue polypeptide: Chitin synthase 2 (928 aa).

2 disordered regions span residues 1 to 45 (MAYN…EAYA) and 110 to 179 (AYYT…SPAP). Positions 17 to 28 (PSAQPQYDSRSP) are enriched in polar residues. The segment covering 130 to 140 (PSHDEPYRPDT) has biased composition (basic and acidic residues). A run of 9 helical transmembrane segments spans residues 472-492 (SAFG…YVAL), 570-589 (WLNG…YQLW), 613-633 (LFAW…TASL), 644-664 (TVLG…CFIL), 678-698 (MMMV…SIFL), 723-743 (FFGL…ASFL), 753-773 (CFLQ…IYAF), 854-874 (VTAW…IAGF), and 893-913 (VILW…CWFL).

Belongs to the chitin synthase family. Class I subfamily.

The protein resides in the cell membrane. It catalyses the reaction [(1-&gt;4)-N-acetyl-beta-D-glucosaminyl](n) + UDP-N-acetyl-alpha-D-glucosamine = [(1-&gt;4)-N-acetyl-beta-D-glucosaminyl](n+1) + UDP + H(+). Polymerizes chitin, a structural polymer of the cell wall and septum, by transferring the sugar moiety of UDP-GlcNAc to the non-reducing end of the growing chitin polymer. CHS2 plays a synergistic role to CHS1 in normal yeast cell reproductive growth, even if this role is less predominant than for CHS1. With CHS3, plays an important role in virulence. This is Chitin synthase 2 from Exophiala dermatitidis (Black yeast-like fungus).